Reading from the N-terminus, the 214-residue chain is Orotidine 5'-phosphate decarboxylase (214 aa).

Substrate is bound by residues Asp-11, Lys-33, Asp-59–Thr-68, Ser-114, Pro-164–Ser-174, Gly-187, and Arg-188. Lys-61 serves as the catalytic Proton donor.

The protein belongs to the OMP decarboxylase family. Type 1 subfamily. As to quaternary structure, homodimer.

It catalyses the reaction orotidine 5'-phosphate + H(+) = UMP + CO2. The protein operates within pyrimidine metabolism; UMP biosynthesis via de novo pathway; UMP from orotate: step 2/2. Catalyzes the decarboxylation of orotidine 5'-monophosphate (OMP) to uridine 5'-monophosphate (UMP). The chain is Orotidine 5'-phosphate decarboxylase from Thermoplasma acidophilum (strain ATCC 25905 / DSM 1728 / JCM 9062 / NBRC 15155 / AMRC-C165).